Consider the following 112-residue polypeptide: UPF0235 protein Atu2660 (112 aa).

Belongs to the UPF0235 family.

This is UPF0235 protein Atu2660 from Agrobacterium fabrum (strain C58 / ATCC 33970) (Agrobacterium tumefaciens (strain C58)).